We begin with the raw amino-acid sequence, 329 residues long: Cathepsin K (329 aa).

Positions Met-1–Ala-15 are cleaved as a signal peptide. Positions Leu-16–Arg-114 are cleaved as a propeptide — activation peptide. The N-linked (GlcNAc...) asparagine glycan is linked to Asn-103. 3 disulfides stabilise this stretch: Cys-136–Cys-177, Cys-170–Cys-210, and Cys-269–Cys-318. Cys-139 is a catalytic residue. Residues His-276 and Asn-296 contribute to the active site.

The protein belongs to the peptidase C1 family.

The protein localises to the lysosome. The protein resides in the secreted. It localises to the apical cell membrane. It carries out the reaction Broad proteolytic activity. With small-molecule substrates and inhibitors, the major determinant of specificity is P2, which is preferably Leu, Met &gt; Phe, and not Arg.. Functionally, thiol protease involved in osteoclastic bone resorption and may participate partially in the disorder of bone remodeling. Displays potent endoprotease activity against fibrinogen at acid pH. May play an important role in extracellular matrix degradation. Involved in the release of thyroid hormone thyroxine (T4) by limited proteolysis of TG/thyroglobulin in the thyroid follicle lumen. The protein is Cathepsin K (CTSK) of Macaca fascicularis (Crab-eating macaque).